A 513-amino-acid polypeptide reads, in one-letter code: Histone acetyltransferase KAT5 (513 aa).

One can recognise a Tudor-knot domain in the interval 8–65 (IEGCRLPVLRRNQDNEDEWPLAEILSVKDISGRKLFYVHYIDFNKRLDEWVTHERLDL). Lys-52 bears the N6-acetyllysine mark. Positions 69–106 (QFPKKEAKTPTKNGLPGSRPGSPEREVPASAQASGKTL) are disordered. Ser-86 bears the Phosphoserine; by GSK3 mark. Ser-90 bears the Phosphoserine; by CDK1 and CDK9 mark. 2 positions are modified to N6-acetyllysine; by autocatalysis: Lys-104 and Lys-120. A disordered region spans residues 122–220 (REAIPGGEPD…RMTGSLVSDR (99 aa)). Positions 133-144 (PLSSSSCLQPNH) are enriched in polar residues. Lys-148, Lys-150, Lys-187, and Lys-189 each carry N6-acetyllysine; by autocatalysis. Residue Ser-199 is modified to Phosphoserine. Positions 227-504 (TRMKNIECIE…IDSKCLHFTP (278 aa)) constitute an MYST-type HAT domain. Residues 260-285 (LYLCEFCLKYGRSLKCLQRHLTKCDL) form a C2HC MYST-type zinc finger. Lys-327 is modified (N6-acetyllysine; by autocatalysis). Residues 368–513 (ACILTLPPYQ…PKDWSKRGKW (146 aa)) form an interaction with ATF2 region. Residues 370-372 (ILT) and 377-383 (QRRGYGK) each bind acetyl-CoA. Glu-403 acts as the Proton donor/acceptor in catalysis. 2 residues coordinate acetyl-CoA: Ser-407 and Ser-416. A Glycyl lysine isopeptide (Lys-Gly) (interchain with G-Cter in SUMO1); alternate cross-link involves residue Lys-430. Residue Lys-430 forms a Glycyl lysine isopeptide (Lys-Gly) (interchain with G-Cter in SUMO2); alternate linkage. Lys-451 is covalently cross-linked (Glycyl lysine isopeptide (Lys-Gly) (interchain with G-Cter in SUMO1)).

Belongs to the MYST (SAS/MOZ) family. As to quaternary structure, component of the NuA4 histone acetyltransferase complex which contains the catalytic subunit KAT5/TIP60 and the subunits EP400, TRRAP/PAF400, BRD8/SMAP, EPC1, DMAP1/DNMAP1, RUVBL1/TIP49, RUVBL2, ING3, actin, ACTL6A/BAF53A, MORF4L1/MRG15, MORF4L2/MRGX, MRGBP, YEATS4/GAS41, VPS72/YL1 and MEAF6. KAT5/TIP60, EPC1, and ING3 together constitute a minimal HAT complex termed Piccolo NuA4. The NuA4 complex interacts with MYC. Interacts with ATM. Interacts with JADE1. Interacts with PLA2G4A/CPLA2, EDNRA and HDAC7. Interacts with the cytoplasmic tail of APP and APBB1/FE65. Interacts with TRIM24 and TRIM68. Forms a complex with SENP6 and UBE2I in response to UV irradiation. Identified in a complex with HINT1. Interacts with ATF2 and CUL3. Interacts with NR1D2 (via N-terminus). Component of a SWR1-like complex. Interacts with FOXP3. Interacts with ZBTB49. Interacts with SRF. Interacts with ATF3; promoting autoacetylation and deubiquitination by USP7. Interacts with EP300/p300; interaction promotes KAT5 autoacetylation. Interacts with PRKDC; interaction is impaired following KAT5 sumoylation. Interacts with GPR50. Interacts with NME3; this interaction enables recruitment of NME3 at DNA damage sites where it plays a role in the repair of DNA. (Microbial infection) Interacts with HIV-1 TAT. Post-translationally, phosphorylated on Ser-86 and Ser-90; enhanced during G2/M phase. The phosphorylated form has a higher activity. Phosphorylation at Ser-90 by CDK1 or CDK9 is a prerequisite for phosphorylation at Ser-86 by GSK3. Phosphorylation at Ser-86 by GSK3 (GSK3A or GSK3B) activates acetyltransferase and acyltransferase activities. Phosphorylation at Ser-90 by CDK9 promotes KAT5 recruitment to chromatin. Phosphorylation by VRK1 following DNA damage promotes KAT5 association with chromatin and histone acetyltransferase activity. Autoacetylated. Autoacetylation is required for histone acetyltransferase activity. Autoacetylation at Lys-327 is facilitated by interaction with EP300/p300: it prevents ubiquitination and subsequent degradation by the proteasome and promotes acetylation of target proteins. Deacetylated by HDAC3 and SIRT1. Deacetylation by HDAC3 promotes its ubiquitination and cytoplasmic localization. In terms of processing, sumoylated by UBE2I at Lys-430 and Lys-451, leading to increase of its histone acetyltransferase activity in UV-induced DNA damage response, as well as its translocation to nuclear bodies. Sumoylation with SUMO2 by PIAS4 at Lys-430 promotes repair of DNA double-strand breaks (DSBs) via homologous recombination (HR). Sumoylation by PIAS4 impairs interaction with PRKDC, inhibiting non-homologous end joining (NHEJ)-mediated repair of DSBs, thereby facilitating HR. Desumoylated by SENP3. Post-translationally, ubiquitinated by MDM2, leading to its proteasome-dependent degradation. Ubiquitination is prevented by autoacetylation at Lys-327. Ubiquitinated following deacetylation by HDAC3, leading to cytoplasmic localization. Deubiquitinated by USP7 following interaction with ATF3, promoting its stabilization. (Microbial infection) In case of HIV-1 infection, interaction with the viral Tat protein leads to KAT5 polyubiquitination and targets it to degradation.

The protein resides in the nucleus. It is found in the chromosome. It localises to the cytoplasm. The protein localises to the centromere. Its subcellular location is the kinetochore. The protein resides in the cytoskeleton. It is found in the spindle pole. It localises to the nucleolus. The protein localises to the perinuclear region. The enzyme catalyses L-lysyl-[histone] + acetyl-CoA = N(6)-acetyl-L-lysyl-[histone] + CoA + H(+). It carries out the reaction L-lysyl-[protein] + acetyl-CoA = N(6)-acetyl-L-lysyl-[protein] + CoA + H(+). The catalysed reaction is (2E)-butenoyl-CoA + L-lysyl-[protein] = N(6)-(2E)-butenoyl-L-lysyl-[protein] + CoA + H(+). It catalyses the reaction 2-hydroxyisobutanoyl-CoA + L-lysyl-[protein] = N(6)-(2-hydroxyisobutanoyl)-L-lysyl-[protein] + CoA + H(+). The enzyme catalyses (S)-lactoyl-CoA + L-lysyl-[protein] = N(6)-[(S)-lactoyl]-L-lysyl-[protein] + CoA + H(+). Acyltransferase and acetyltransferase activities are activated by phosphorylation and autoacetylation. Autoacetylation activates the histone acetyltransferase activity. Its function is as follows. Catalytic subunit of the NuA4 histone acetyltransferase complex, a multiprotein complex involved in transcriptional activation of select genes principally by acetylation of nucleosomal histones H2A and H4. Histone acetylation alters nucleosome-DNA interactions and promotes interaction of the modified histones with other proteins which positively regulate transcription. The NuA4 histone acetyltransferase complex is required for the activation of transcriptional programs associated with proto-oncogene mediated growth induction, tumor suppressor mediated growth arrest and replicative senescence, apoptosis, and DNA repair. The NuA4 complex plays a direct role in repair of DNA double-strand breaks (DSBs) by promoting homologous recombination (HR): the complex inhibits TP53BP1 binding to chromatin via MBTD1, which recognizes and binds histone H4 trimethylated at 'Lys-20' (H4K20me), and KAT5 that catalyzes acetylation of 'Lys-15' of histone H2A (H2AK15ac), thereby blocking the ubiquitination mark required for TP53BP1 localization at DNA breaks. Also involved in DSB repair by mediating acetylation of 'Lys-5' of histone H2AX (H2AXK5ac), promoting NBN/NBS1 assembly at the sites of DNA damage. The NuA4 complex plays a key role in hematopoietic stem cell maintenance and is required to maintain acetylated H2A.Z/H2AZ1 at MYC target genes. The NuA4 complex is also required for spermatid development by promoting acetylation of histones: histone hyperacetylation is required for histone replacement during the transition from round to elongating spermatids. Component of a SWR1-like complex that specifically mediates the removal of histone H2A.Z/H2AZ1 from the nucleosome. Also acetylates non-histone proteins, such as BMAL1, ATM, AURKB, CHKA, CGAS, ERCC4/XPF, LPIN1, TP53/p53, NDC80/HEC1, NR1D2, RAN, SOX4, FOXP3, SQSTM1, ULK1 and RUBCNL/Pacer. Directly acetylates and activates ATM. Promotes nucleotide excision repair (NER) by mediating acetylation of ERCC4/XPF, thereby promoting formation of the ERCC4-ERCC1 complex. Relieves NR1D2-mediated inhibition of APOC3 expression by acetylating NR1D2. Acts as a regulator of regulatory T-cells (Treg) by catalyzing FOXP3 acetylation, thereby promoting FOXP3 transcriptional repressor activity. Involved in skeletal myoblast differentiation by mediating acetylation of SOX4. Catalyzes acetylation of APBB1/FE65, increasing its transcription activator activity. Promotes transcription elongation during the activation phase of the circadian cycle by catalyzing acetylation of BMAL1, promoting elongation of circadian transcripts. Together with GSK3 (GSK3A or GSK3B), acts as a regulator of autophagy: phosphorylated at Ser-86 by GSK3 under starvation conditions, leading to activate acetyltransferase activity and promote acetylation of key autophagy regulators, such as ULK1 and RUBCNL/Pacer. Acts as a regulator of the cGAS-STING innate antiviral response by catalyzing acetylation the N-terminus of CGAS, thereby promoting CGAS DNA-binding and activation. Also regulates lipid metabolism by mediating acetylation of CHKA or LPIN1. Promotes lipolysis of lipid droplets following glucose deprivation by mediating acetylation of isoform 1 of CHKA, thereby promoting monomerization of CHKA and its conversion into a tyrosine-protein kinase. Acts as a regulator of fatty-acid-induced triacylglycerol synthesis by catalyzing acetylation of LPIN1, thereby promoting the synthesis of diacylglycerol. In addition to protein acetyltransferase, can use different acyl-CoA substrates, such as (2E)-butenoyl-CoA (crotonyl-CoA), S-lactoyl-CoA (lactyl-CoA) and 2-hydroxyisobutanoyl-CoA (2-hydroxyisobutyryl-CoA), and is able to mediate protein crotonylation, lactylation and 2-hydroxyisobutyrylation, respectively. Acts as a key regulator of chromosome segregation and kinetochore-microtubule attachment during mitosis by mediating acetylation or crotonylation of target proteins. Catalyzes acetylation of AURKB at kinetochores, increasing AURKB activity and promoting accurate chromosome segregation in mitosis. Acetylates RAN during mitosis, promoting microtubule assembly at mitotic chromosomes. Acetylates NDC80/HEC1 during mitosis, promoting robust kinetochore-microtubule attachment. Catalyzes crotonylation of MAPRE1/EB1, thereby ensuring accurate spindle positioning in mitosis. Catalyzes lactylation of NBN/NBS1 in response to DNA damage, thereby promoting DNA double-strand breaks (DSBs) via homologous recombination (HR). Functionally, (Microbial infection) Catalyzes the acetylation of flavivirus NS3 protein to modulate their RNA-binding and -unwinding activities leading to facilitate viral replication. This chain is Histone acetyltransferase KAT5, found in Homo sapiens (Human).